The sequence spans 84 residues: RNA-binding protein Hfq (84 aa).

Residues 9–69 form the Sm domain; that stretch reads DRFLNILRTN…VSTIMPESFV (61 aa).

It belongs to the Hfq family. In terms of assembly, homohexamer.

Functionally, RNA chaperone that binds small regulatory RNA (sRNAs) and mRNAs to facilitate mRNA translational regulation in response to envelope stress, environmental stress and changes in metabolite concentrations. Also binds with high specificity to tRNAs. This Thermosipho africanus (strain TCF52B) protein is RNA-binding protein Hfq.